The chain runs to 164 residues: MNIVDQQTFRDAMSCMGAAVNIITTDGPAGRAGFTASAVCSVTDTPPTLLVCLNRGASVWPVFNENRTLCVNTLSAGQEPLSNLFGGKTPMEHRFAAARWQTGVTGCPQLEEALVSFDCRINQVVSVGTHDILFCTIEAIHRHATPYGLVWFDRSYHALMRPAC.

This sequence belongs to the non-flavoprotein flavin reductase family. RutF subfamily.

The enzyme catalyses FMNH2 + NAD(+) = FMN + NADH + 2 H(+). In terms of biological role, catalyzes the reduction of FMN to FMNH2 which is used to reduce pyrimidine by RutA via the Rut pathway. The chain is FMN reductase (NADH) RutF from Escherichia coli O127:H6 (strain E2348/69 / EPEC).